Here is a 1238-residue protein sequence, read N- to C-terminus: uncharacterized protein (1238 aa).

Disordered regions lie at residues 1–38 (MSSKRRNKNNKNNNKNNNKNNDNNNNIEQQDDIEDISS), 122–156 (SSTPISQLSPFKTPSPPSSSSSSSQSPLRKPRPSF), 229–439 (PKNN…KNKE), 660–1016 (KNKL…TGAA), 1051–1083 (EEEDDEEEKEQQNNNNNINSNSKNNNVNNKLNS), and 1098–1191 (KKSG…NASR). Composition is skewed to low complexity over residues 10 to 26 (NKNNNKNNNKNNDNNNN), 129 to 149 (LSPFKTPSPPSSSSSSSQSPL), and 234 to 276 (QIDS…TQSQ). Polar residues predominate over residues 317–343 (ELQNQTQINKSKQDLTNISQKINITTS). A compositionally biased stretch (basic and acidic residues) spans 344-361 (QHDKDDLGEYRMSEKGGG). Over residues 362–372 (DDGDDDDDYDN) the composition is skewed to acidic residues. Residues 383–394 (TNKKQQQQHHHK) show a composition bias toward basic residues. Basic and acidic residues predominate over residues 395 to 416 (GKEESQSEYYEKEKEKEKEDIA). 3 stretches are compositionally biased toward low complexity: residues 417–435 (TTRATTTTKSTDNSNNNIN), 678–691 (QQQQQQKQQQQQQE), and 712–792 (QPSQ…QEKQ). The segment covering 793–805 (QSQEKHQSQEKHQ) has biased composition (basic and acidic residues). Composition is skewed to low complexity over residues 806-859 (SQQS…SQQK) and 882-906 (SQSQSDLSQQFLSQSQSQSQSQSQR). Over residues 916–927 (ENQDSENLDDTV) the composition is skewed to acidic residues. Residues 929 to 944 (MNYNQIPSTLDHSTLQ) are compositionally biased toward polar residues. The span at 966 to 975 (EIERRRRELA) shows a compositional bias: basic and acidic residues. Positions 976-990 (GEDSDEEFEILDEDQ) are enriched in acidic residues. Composition is skewed to low complexity over residues 1062–1083 (QNNNNNINSNSKNNNVNNKLNS) and 1108–1121 (SSSSTNFYSSNKKN). Positions 1123–1133 (PQPTKSVNKPR) are enriched in polar residues. Positions 1142-1181 (SQNRQKQSEQQQQQPQQQPQLPQQQQQQQQQQQLRQQQNE) are enriched in low complexity. Residues 1182-1191 (NTISSLNASR) are compositionally biased toward polar residues.

This is an uncharacterized protein from Dictyostelium discoideum (Social amoeba).